Here is a 697-residue protein sequence, read N- to C-terminus: Polyribonucleotide nucleotidyltransferase (697 aa).

Residues Asp-490 and Asp-496 each contribute to the Mg(2+) site. The 60-residue stretch at 557–616 folds into the KH domain; sequence PKVVTMTIKPEKIRDVIGPGGKKINEIIDETGVKLDIEQDGTIFIGAVDKDAIARARSII. The S1 motif domain maps to 626–694; the sequence is GQVYEGKVKR…KQGRVNASHK (69 aa).

The protein belongs to the polyribonucleotide nucleotidyltransferase family. Mg(2+) is required as a cofactor.

The protein localises to the cytoplasm. The catalysed reaction is RNA(n+1) + phosphate = RNA(n) + a ribonucleoside 5'-diphosphate. In terms of biological role, involved in mRNA degradation. Catalyzes the phosphorolysis of single-stranded polyribonucleotides processively in the 3'- to 5'-direction. The protein is Polyribonucleotide nucleotidyltransferase of Staphylococcus saprophyticus subsp. saprophyticus (strain ATCC 15305 / DSM 20229 / NCIMB 8711 / NCTC 7292 / S-41).